The primary structure comprises 262 residues: 4-hydroxy-tetrahydrodipicolinate reductase (262 aa).

Gly9 to Met14 provides a ligand contact to NAD(+). Arg36 provides a ligand contact to NADP(+). Residues Gly100–Thr102 and Ser121–Met124 contribute to the NAD(+) site. Catalysis depends on His154, which acts as the Proton donor/acceptor. Position 155 (His155) interacts with (S)-2,3,4,5-tetrahydrodipicolinate. Lys158 serves as the catalytic Proton donor. (S)-2,3,4,5-tetrahydrodipicolinate is bound at residue Gly164 to Thr165.

Belongs to the DapB family.

The protein localises to the cytoplasm. The catalysed reaction is (S)-2,3,4,5-tetrahydrodipicolinate + NAD(+) + H2O = (2S,4S)-4-hydroxy-2,3,4,5-tetrahydrodipicolinate + NADH + H(+). It carries out the reaction (S)-2,3,4,5-tetrahydrodipicolinate + NADP(+) + H2O = (2S,4S)-4-hydroxy-2,3,4,5-tetrahydrodipicolinate + NADPH + H(+). The protein operates within amino-acid biosynthesis; L-lysine biosynthesis via DAP pathway; (S)-tetrahydrodipicolinate from L-aspartate: step 4/4. Catalyzes the conversion of 4-hydroxy-tetrahydrodipicolinate (HTPA) to tetrahydrodipicolinate. The polypeptide is 4-hydroxy-tetrahydrodipicolinate reductase (Wolbachia pipientis subsp. Culex pipiens (strain wPip)).